The sequence spans 830 residues: WD repeat-containing protein 75 (830 aa).

WD repeat units lie at residues 4–42 (EGVRVVRCGGSRLNFRRAVFSVDSKYIFCVSGDFVKVYS), 46–85 (EECVHILHGHTDLVSGILVNPSNHLQLYSCSFDGTIKLWD), 89–130 (GILI…QLVS), 144–183 (RQLTFVLDYINRSPKCIAFGNEGEYVAAVRDFYLSVYFFK), 192–230 (LPSTKNKKNAKNKFTCVACHPKEDCIASGHMDGKIRLWR), 236–275 (QKYTYTCLHWHHDMVMDLAFTVTGTSLLSGGRECVLVEWR), 278–317 (SEKNKEFLPRLGSSIEHISVSPAGDLFCTSHSDNKITVIH), 323–361 (SAVIQGLVKDRSISTGLMVDPRTKALVLNGKPGHLQFYS), and 375–422 (QQEY…KLWN). Residue Lys-426 forms a Glycyl lysine isopeptide (Lys-Gly) (interchain with G-Cter in SUMO2) linkage. 4 WD repeats span residues 429-473 (GFVL…KVWI), 486-524 (AWTCDFVGSYHKYQATNCCFSEDGSLLAVSFEEIVTIWD), 528-568 (WELK…CCWN), and 573-610 (SIQWSAKLNVRVMEPDPYSDHVAAVAQSSAGSDLFVFK). Ser-663 and Ser-671 each carry phosphoserine. Lys-675 is covalently cross-linked (Glycyl lysine isopeptide (Lys-Gly) (interchain with G-Cter in SUMO2)). The disordered stretch occupies residues 761–807 (KSAEEVPDDVDMEGNKESDDSDEEYDLTEKDKETNNNTDLGEDAIHQ). Ser-778 and Ser-781 each carry phosphoserine. Tyr-785 carries the post-translational modification Phosphotyrosine. Residue Ser-811 is modified to Phosphoserine.

Component of the proposed t-UTP subcomplex of the ribosomal small subunit (SSU) processome. SSU processome is composed of more than 70 proteins and the RNA chaperone small nucleolar RNA (snoRNA) U3.

The protein localises to the nucleus. It localises to the nucleolus. In terms of biological role, ribosome biogenesis factor. Part of the small subunit (SSU) processome, first precursor of the small eukaryotic ribosomal subunit. During the assembly of the SSU processome in the nucleolus, many ribosome biogenesis factors, an RNA chaperone and ribosomal proteins associate with the nascent pre-rRNA and work in concert to generate RNA folding, modifications, rearrangements and cleavage as well as targeted degradation of pre-ribosomal RNA by the RNA exosome. Involved in nucleolar processing of pre-18S ribosomal RNA. Required for optimal pre-ribosomal RNA transcription by RNA polymerase I. The sequence is that of WD repeat-containing protein 75 (Wdr75) from Mus musculus (Mouse).